The sequence spans 227 residues: Cytochrome c oxidase subunit 2 (227 aa).

Residues 1–14 lie on the Mitochondrial intermembrane side of the membrane; it reads MAYPFQLGLQDATS. A helical membrane pass occupies residues 15 to 45; it reads PIMEELLHFHDHTLMIVFLISSLVLYIISLM. The Mitochondrial matrix portion of the chain corresponds to 46-59; the sequence is LTTKLTHTSTMDAQ. The chain crosses the membrane as a helical span at residues 60-87; the sequence is EVETVWTILPAIILILIALPSLRILYMM. Topologically, residues 88–227 are mitochondrial intermembrane; the sequence is DEINNPSLTV…YFETWSAVMV (140 aa). The Cu cation site is built by His-161, Cys-196, Glu-198, Cys-200, His-204, and Met-207. Residue Glu-198 coordinates Mg(2+). Position 218 is a phosphotyrosine (Tyr-218).

This sequence belongs to the cytochrome c oxidase subunit 2 family. Component of the cytochrome c oxidase (complex IV, CIV), a multisubunit enzyme composed of 14 subunits. The complex is composed of a catalytic core of 3 subunits MT-CO1, MT-CO2 and MT-CO3, encoded in the mitochondrial DNA, and 11 supernumerary subunits COX4I, COX5A, COX5B, COX6A, COX6B, COX6C, COX7A, COX7B, COX7C, COX8 and NDUFA4, which are encoded in the nuclear genome. The complex exists as a monomer or a dimer and forms supercomplexes (SCs) in the inner mitochondrial membrane with NADH-ubiquinone oxidoreductase (complex I, CI) and ubiquinol-cytochrome c oxidoreductase (cytochrome b-c1 complex, complex III, CIII), resulting in different assemblies (supercomplex SCI(1)III(2)IV(1) and megacomplex MCI(2)III(2)IV(2)). Found in a complex with TMEM177, COA6, COX18, COX20, SCO1 and SCO2. Interacts with TMEM177 in a COX20-dependent manner. Interacts with COX20. Interacts with COX16. Requires Cu cation as cofactor.

It is found in the mitochondrion inner membrane. It catalyses the reaction 4 Fe(II)-[cytochrome c] + O2 + 8 H(+)(in) = 4 Fe(III)-[cytochrome c] + 2 H2O + 4 H(+)(out). Its function is as follows. Component of the cytochrome c oxidase, the last enzyme in the mitochondrial electron transport chain which drives oxidative phosphorylation. The respiratory chain contains 3 multisubunit complexes succinate dehydrogenase (complex II, CII), ubiquinol-cytochrome c oxidoreductase (cytochrome b-c1 complex, complex III, CIII) and cytochrome c oxidase (complex IV, CIV), that cooperate to transfer electrons derived from NADH and succinate to molecular oxygen, creating an electrochemical gradient over the inner membrane that drives transmembrane transport and the ATP synthase. Cytochrome c oxidase is the component of the respiratory chain that catalyzes the reduction of oxygen to water. Electrons originating from reduced cytochrome c in the intermembrane space (IMS) are transferred via the dinuclear copper A center (CU(A)) of subunit 2 and heme A of subunit 1 to the active site in subunit 1, a binuclear center (BNC) formed by heme A3 and copper B (CU(B)). The BNC reduces molecular oxygen to 2 water molecules using 4 electrons from cytochrome c in the IMS and 4 protons from the mitochondrial matrix. This chain is Cytochrome c oxidase subunit 2 (MT-CO2), found in Lycalopex sechurae (Sechuran desert fox).